The sequence spans 235 residues: Elongation factor Tu, chloroplastic (235 aa).

The 125-residue stretch at 1–125 (KNMITGAAQM…AVDSYIPTPE (125 aa)) folds into the tr-type G domain. 47–50 (NKED) lines the GTP pocket.

It belongs to the TRAFAC class translation factor GTPase superfamily. Classic translation factor GTPase family. EF-Tu/EF-1A subfamily.

Its subcellular location is the plastid. It localises to the chloroplast. The enzyme catalyses GTP + H2O = GDP + phosphate + H(+). Functionally, GTP hydrolase that promotes the GTP-dependent binding of aminoacyl-tRNA to the A-site of ribosomes during protein biosynthesis. The sequence is that of Elongation factor Tu, chloroplastic (tufA) from Mantoniella squamata (Unicellular alga).